Reading from the N-terminus, the 127-residue chain is Interacting with cytoskeleton protein 1 (127 aa).

The protein localises to the vacuole membrane. Required for viability of cells lacking mtDNA. This is Interacting with cytoskeleton protein 1 (ICY1) from Saccharomyces cerevisiae (strain ATCC 204508 / S288c) (Baker's yeast).